A 209-amino-acid polypeptide reads, in one-letter code: Dual specificity phosphatase 29 (209 aa).

The region spanning 45–193 is the Tyrosine-protein phosphatase domain; the sequence is HVNEVWPNLY…LRELDIKLAL (149 aa). 137 to 144 is a substrate binding site; it reads NCAMGRSR. The active-site Phosphocysteine intermediate is C138.

Belongs to the protein-tyrosine phosphatase family. Non-receptor class dual specificity subfamily.

It localises to the cytoplasm. The protein resides in the nucleus. It carries out the reaction O-phospho-L-tyrosyl-[protein] + H2O = L-tyrosyl-[protein] + phosphate. The enzyme catalyses O-phospho-L-seryl-[protein] + H2O = L-seryl-[protein] + phosphate. It catalyses the reaction O-phospho-L-threonyl-[protein] + H2O = L-threonyl-[protein] + phosphate. Its function is as follows. Dual specificity phosphatase able to dephosphorylate phosphotyrosine, phosphoserine and phosphothreonine residues, with a preference for phosphotyrosine as a substrate. Dual specificity phosphatase able to dephosphorylate phosphotyrosine, phosphoserine and phosphothreonine residues within the same substrate, with a preference for phosphotyrosine as a substrate. Involved in the modulation of AMPK and MAPK1/2 signaling pathway. The polypeptide is Dual specificity phosphatase 29 (dusp29) (Xenopus laevis (African clawed frog)).